A 274-amino-acid polypeptide reads, in one-letter code: Large ribosomal subunit protein uL2cz/uL2cy (274 aa).

Disordered stretches follow at residues 1–23 (MAIHLYKTSTPSTRNRAVDSQVK) and 224–274 (NPVD…RRSK).

Belongs to the universal ribosomal protein uL2 family. In terms of assembly, part of the 50S ribosomal subunit.

Its subcellular location is the plastid. It localises to the chloroplast. This chain is Large ribosomal subunit protein uL2cz/uL2cy (rpl2-A), found in Vitis vinifera (Grape).